We begin with the raw amino-acid sequence, 131 residues long: DNA-binding protein inhibitor ID-4 (131 aa).

The bHLH domain maps to 36-88 (ARYKMEEEETLCLQYDMNDCYSRLKRLVPTIPPNKKVSKVEILQHVIDYILDL).

As to quaternary structure, heterodimer with other HLH proteins. During embryonic development, expressed in a number of neural tissues, including Rohon-Beard neurons, olfactory placode, eye primordia, and the trigeminal ganglia. Also expressed in other organs including the pronephros and liver primordium. Pronephric development begins by stage 25 and increases during tailbud stages. Expressed in both the tubules and the duct. As embryogenesis progresses, expressed in the migrating melanocytes and lateral line structures.

It is found in the nucleus. Its function is as follows. Transcriptional regulator (lacking a basic DNA binding domain) which negatively regulates the basic helix-loop-helix (bHLH) transcription factors by forming heterodimers and inhibiting their DNA binding and transcriptional activity. Inhibits the activity of both neurogenic (neurog1/neurogenin, neurod1/neuroD) and myogenic (myod1/myoD) bHLH factors. In Xenopus laevis (African clawed frog), this protein is DNA-binding protein inhibitor ID-4.